We begin with the raw amino-acid sequence, 100 residues long: Urease subunit gamma (100 aa).

Belongs to the urease gamma subunit family. As to quaternary structure, heterotrimer of UreA (gamma), UreB (beta) and UreC (alpha) subunits. Three heterotrimers associate to form the active enzyme. The apoenzyme interacts with an accessory complex composed of UreD, UreF and UreG, which is required for the assembly of the nickel containing metallocenter of UreC. The UreE protein may also play a direct role as a metallochaperone in nickel transfer to the urease apoprotein.

It localises to the cytoplasm. The catalysed reaction is urea + 2 H2O + H(+) = hydrogencarbonate + 2 NH4(+). It functions in the pathway nitrogen metabolism; urea degradation; CO(2) and NH(3) from urea (urease route): step 1/1. With respect to regulation, the apoenzyme can be activated in vitro in the presence of nickel ions and carbon dioxide, which promotes carbamylation of 'Lys-217' of the UreC (alpha) subunit. The sequence is that of Urease subunit gamma from Klebsiella aerogenes (Enterobacter aerogenes).